A 57-amino-acid chain; its full sequence is Potassium channel toxin gamma-KTx 2.1 (57 aa).

Positions 1–21 (MKISFVLLLTLFICSIGWSEA) are cleaved as a signal peptide. 3 cysteine pairs are disulfide-bonded: Cys-28–Cys-49, Cys-34–Cys-54, and Cys-38–Cys-56.

Belongs to the short scorpion toxin superfamily. Potassium channel inhibitor family. Gamma-KTx 2 subfamily. Expressed by the venom gland.

The protein resides in the secreted. Functionally, blocks human and/or rat Kv11.1/KCNH2/ERG1, Kv11.2/KCNH6/ERG2 and Kv11.3/KCNH7/ERG3 by binding to channel outer vestibule (S5P domain) with a 1:1 stoichiometry. Inhibition data are the following: hERG1 (reversible, Kd=7.7 nM, IC(50)=3.3 nM, IC(50)=11.9 nM), rERG1 (reversible, Kd=19 nM), hERG2 (reversible, Kd=77 nM), rERG2 (irreversible, Kd=4.2 nM), hERG3 (reversible, Kd=11.5 nM) and rERG3 (reversible, Kd=747 nM) potassium channels. Also has a minimal effect on rat ELK1/KCNH4 potassium channels (9% inhibition at 100 nM). Both this toxin and CnErgTx1 (AC Q86QT3) share mechanism of action and have overlapping binding sites on ERG1. The potency of these two toxins is not affected by elevating potassium ion concentration from 2 to 98 mM. In addition, at high toxin concentrations, block of ERG1 macroscopic currents by these two toxins is incomplete (88%). The blockade by this toxin is preferentially closed channel state-dependent, with a component of open, but not inactive state-dependent blockade. This toxin produces a concentration-dependent prolongation of QTc in the isolated rabbit heart (16.3% at 100 nM). This is Potassium channel toxin gamma-KTx 2.1 from Mesobuthus eupeus (Lesser Asian scorpion).